The following is a 185-amino-acid chain: UPF0397 protein lhv_0999 (185 aa).

5 helical membrane-spanning segments follow: residues 11–31, 45–65, 72–92, 111–131, and 145–165; these read VVAM…TSIP, FLAL…GFIG, IMYG…GLII, ILLF…VVAP, and VFVQ…VVGT.

This sequence belongs to the UPF0397 family.

Its subcellular location is the cell membrane. This is UPF0397 protein lhv_0999 from Lactobacillus helveticus (strain DPC 4571).